Consider the following 87-residue polypeptide: NADH-ubiquinone oxidoreductase chain 4L (87 aa).

3 helical membrane-spanning segments follow: residues 1-21 (MNLS…NRKN), 22-42 (IILM…LVLI), and 57-77 (LYII…LVAF).

It belongs to the complex I subunit 4L family. Core subunit of respiratory chain NADH dehydrogenase (Complex I) which is composed of 45 different subunits.

The protein resides in the mitochondrion inner membrane. The catalysed reaction is a ubiquinone + NADH + 5 H(+)(in) = a ubiquinol + NAD(+) + 4 H(+)(out). In terms of biological role, core subunit of the mitochondrial membrane respiratory chain NADH dehydrogenase (Complex I) which catalyzes electron transfer from NADH through the respiratory chain, using ubiquinone as an electron acceptor. The chain is NADH-ubiquinone oxidoreductase chain 4L (ND4L) from Moniliophthora perniciosa (strain FA553 / isolate CP02) (Witches'-broom disease fungus).